We begin with the raw amino-acid sequence, 392 residues long: Rhizopuspepsin-5 (392 aa).

Residues 1 to 21 (MKFSLISSCVALAVLVLSTEA) form the signal peptide. A propeptide spans 22-69 (APNGKKVNIPLTKNKDYKPNAKNAIQKVLAKYHRHRSTSSSSNSTSTD) (activation peptide). Positions 85–389 (YFGQVKVGTP…NPTVPQVQIA (305 aa)) constitute a Peptidase A1 domain. Residue Asp103 is part of the active site. An intrachain disulfide couples Cys116 to Cys119. Residue Asp286 is part of the active site. Cysteines 320 and 353 form a disulfide.

Belongs to the peptidase A1 family.

It catalyses the reaction Hydrolysis of proteins with broad specificity similar to that of pepsin A, preferring hydrophobic residues at P1 and P1'. Clots milk and activates trypsinogen. Does not cleave 4-Gln-|-His-5, but does cleave 10-His-|-Leu-11 and 12-Val-|-Glu-13 in B chain of insulin.. The chain is Rhizopuspepsin-5 from Rhizopus niveus.